The chain runs to 130 residues: Aspartate 1-decarboxylase (130 aa).

S25 (schiff-base intermediate with substrate; via pyruvic acid) is an active-site residue. At S25 the chain carries Pyruvic acid (Ser). T57 lines the substrate pocket. Catalysis depends on Y58, which acts as the Proton donor. 73–75 (GAT) lines the substrate pocket.

The protein belongs to the PanD family. In terms of assembly, heterooctamer of four alpha and four beta subunits. Requires pyruvate as cofactor. In terms of processing, is synthesized initially as an inactive proenzyme, which is activated by self-cleavage at a specific serine bond to produce a beta-subunit with a hydroxyl group at its C-terminus and an alpha-subunit with a pyruvoyl group at its N-terminus.

It localises to the cytoplasm. It catalyses the reaction L-aspartate + H(+) = beta-alanine + CO2. It functions in the pathway cofactor biosynthesis; (R)-pantothenate biosynthesis; beta-alanine from L-aspartate: step 1/1. In terms of biological role, catalyzes the pyruvoyl-dependent decarboxylation of aspartate to produce beta-alanine. The chain is Aspartate 1-decarboxylase from Lactiplantibacillus plantarum (strain ATCC BAA-793 / NCIMB 8826 / WCFS1) (Lactobacillus plantarum).